Here is a 719-residue protein sequence, read N- to C-terminus: Probable disease resistance protein At4g14610 (719 aa).

The stretch at Ser-25–Leu-73 forms a coiled coil. The 305-residue stretch at Glu-114–Pro-418 folds into the NB-ARC domain. Gly-156 to Thr-163 serves as a coordination point for ATP. 3 LRR repeats span residues Ala-400–Pro-421, Gln-422–Phe-444, and Asn-447–Val-469.

Belongs to the disease resistance NB-LRR family.

Its function is as follows. Probable disease resistance protein. This Arabidopsis thaliana (Mouse-ear cress) protein is Probable disease resistance protein At4g14610.